The chain runs to 247 residues: ATP synthase subunit a, chloroplastic (247 aa).

The next 5 helical transmembrane spans lie at 36–56, 95–115, 134–154, 199–219, and 220–240; these read GQVLLVSWFVMTIIISLSIFG, VPFIGTIFLFIFVSNWSGALV, INTTAALALLTSISYFYAGFS, LVVGVLITLVPLVVPMPLMLL, and GLFTSAIQALIFATLAAAYIG.

It belongs to the ATPase A chain family. F-type ATPases have 2 components, CF(1) - the catalytic core - and CF(0) - the membrane proton channel. CF(1) has five subunits: alpha(3), beta(3), gamma(1), delta(1), epsilon(1). CF(0) has four main subunits: a, b, b' and c.

Its subcellular location is the plastid. The protein resides in the chloroplast thylakoid membrane. Functionally, key component of the proton channel; it plays a direct role in the translocation of protons across the membrane. The chain is ATP synthase subunit a, chloroplastic from Mesostigma viride (Green alga).